An 882-amino-acid polypeptide reads, in one-letter code: Alanine--tRNA ligase (882 aa).

Residues His568, His572, Cys670, and His674 each contribute to the Zn(2+) site.

This sequence belongs to the class-II aminoacyl-tRNA synthetase family. Zn(2+) serves as cofactor.

The protein resides in the cytoplasm. The enzyme catalyses tRNA(Ala) + L-alanine + ATP = L-alanyl-tRNA(Ala) + AMP + diphosphate. Catalyzes the attachment of alanine to tRNA(Ala) in a two-step reaction: alanine is first activated by ATP to form Ala-AMP and then transferred to the acceptor end of tRNA(Ala). Also edits incorrectly charged Ser-tRNA(Ala) and Gly-tRNA(Ala) via its editing domain. The sequence is that of Alanine--tRNA ligase from Syntrophotalea carbinolica (strain DSM 2380 / NBRC 103641 / GraBd1) (Pelobacter carbinolicus).